A 124-amino-acid chain; its full sequence is MAVLGPKATLAAVFIGPFIVACMLGIGLVYLLQLQVQIFHVKDTIRVTGKPATVSYTISTPVTPSATTLDGTTYTLIRPTSSYTRVYLGKTRGFDTSTFGPKVLDYITSSKPHLNSGRPYSLSC.

The helical transmembrane segment at 12–32 (AVFIGPFIVACMLGIGLVYLL) threads the bilayer.

The protein belongs to the coronaviruses ns4/ns4.8 protein family.

The protein localises to the host membrane. This chain is Non-structural protein 4, found in Mus musculus (Mouse).